A 598-amino-acid chain; its full sequence is MNSHYLTLIMNSGALLTIIVLLPPIIMPKPSMILTTKLVKISMFISLIPLTIYLNENMETTLTMKPWMDWALFNIALSFKIDKYTVIFTPIALMITWSIMEFSQWYMAKERHMDKFFKYLLLFLITMITFISANNLLQLFIGWEGVGIMSFLLISWWSGRTKANISALQAVAYNRIGDIGLMMSMVWMCSNTNSWDLQQITMLLSDQQYLIPTLGFLIAATGKSAQFGLHPWLPAAMEGPTPVSALLHSSTMVVAGVFLLIRLHPLFQNYPLMLEMTLCLGAMTTICAALCATTQNDIKKIIAFSTSSQLGLMMVAVGLNHPHIAFLHMCTHAFFKAMLFLCSGSIIHNMNNEQDIRKFSCLNNNLPLTTTCMTIGSAALMGLPFLAGFFTKDLILEALNTSYTNAWALMVTLMAVTLTTAYSSRLIIMSASGTPRYLPLTPTHENNFIKNPLKRLAWGSLISGLILTSTLPPMKPQIFTMPTYIKTIALMMFIISLIISMELTNKKINQTTFSFFTQLAFYPHIIHRLTSHLSLIWSQKLMTQVMDVSWLEKIGPKGLANHQLKPSTTLTEAHHLNSATLPLMAFALTLITLSLTAR.

Helical transmembrane passes span 6-26, 32-52, 84-100, 113-133, 136-156, 241-261, 272-292, 301-320, 325-347, 370-390, 409-429, 456-476, 478-498, and 576-596; these read LTLIMNSGALLTIIVLLPPII, MILTTKLVKISMFISLIPLTI, YTVIFTPIALMITWSIM, MDKFFKYLLLFLITMITFISA, LLQLFIGWEGVGIMSFLLISW, TPVSALLHSSTMVVAGVFLLI, LMLEMTLCLGAMTTICAALCA, IIAFSTSSQLGLMMVAVGLN, AFLHMCTHAFFKAMLFLCSGSII, TTCMTIGSAALMGLPFLAGFF, LMVTLMAVTLTTAYSSRLIIM, LAWGSLISGLILTSTLPPMKP, IFTMPTYIKTIALMMFIISLI, and LNSATLPLMAFALTLITLSLT.

It belongs to the complex I subunit 5 family.

It localises to the mitochondrion inner membrane. The catalysed reaction is a ubiquinone + NADH + 5 H(+)(in) = a ubiquinol + NAD(+) + 4 H(+)(out). Functionally, core subunit of the mitochondrial membrane respiratory chain NADH dehydrogenase (Complex I) that is believed to belong to the minimal assembly required for catalysis. Complex I functions in the transfer of electrons from NADH to the respiratory chain. The immediate electron acceptor for the enzyme is believed to be ubiquinone. The protein is NADH-ubiquinone oxidoreductase chain 5 (MT-ND5) of Petromyzon marinus (Sea lamprey).